The primary structure comprises 239 residues: Sugar fermentation stimulation protein homolog (239 aa).

Belongs to the SfsA family.

The protein is Sugar fermentation stimulation protein homolog of Rhizobium meliloti (strain 1021) (Ensifer meliloti).